The primary structure comprises 146 residues: Hemoglobin subunit beta-1 (146 aa).

Residues 2-146 form the Globin domain; that stretch reads HWTAEEKALI…VAHALARRYH (145 aa). Residue His92 coordinates heme b.

Belongs to the globin family. As to quaternary structure, heterotetramer of two alpha chains and two beta chains. Red blood cells.

Involved in oxygen transport from the lung to the various peripheral tissues. The protein is Hemoglobin subunit beta-1 of Saara hardwickii (Indian spiny-tailed lizard).